A 647-amino-acid polypeptide reads, in one-letter code: Glutamyl-tRNA(Gln) amidotransferase subunit B, mitochondrial (647 aa).

A mitochondrion-targeting transit peptide spans 1 to 16 (MARNLCRNVQTTPRPL). The segment at 39-77 (PRPRYFGSSTAKSAKKKSNNKAYSGSSMSAGDASAGPSR) is disordered. Residues 58-76 (NKAYSGSSMSAGDASAGPS) show a composition bias toward low complexity.

Belongs to the GatB/GatE family. GatB subfamily. In terms of assembly, subunit of the heterotrimeric GatCAB amidotransferase (AdT) complex, composed of A, B and C subunits.

The protein localises to the mitochondrion. It carries out the reaction L-glutamyl-tRNA(Gln) + L-glutamine + ATP + H2O = L-glutaminyl-tRNA(Gln) + L-glutamate + ADP + phosphate + H(+). In terms of biological role, allows the formation of correctly charged Gln-tRNA(Gln) through the transamidation of misacylated Glu-tRNA(Gln) in the mitochondria. The reaction takes place in the presence of glutamine and ATP through an activated gamma-phospho-Glu-tRNA(Gln). This chain is Glutamyl-tRNA(Gln) amidotransferase subunit B, mitochondrial, found in Mycosarcoma maydis (Corn smut fungus).